Here is a 104-residue protein sequence, read N- to C-terminus: Protein KleF (104 aa).

In Escherichia coli, this protein is Protein KleF (kleF).